A 337-amino-acid polypeptide reads, in one-letter code: Protoheme IX farnesyltransferase (337 aa).

Positions 1 to 17 (MPFSISKDTVSNQTTHV) are enriched in polar residues. A disordered region spans residues 1–41 (MPFSISKDTVSNQTTHVATAPASQRPDPVETKVEQEQGRPR). Basic and acidic residues predominate over residues 27–41 (DPVETKVEQEQGRPR). 8 helical membrane-spanning segments follow: residues 59-79 (IIEL…HGVP), 81-101 (LGLV…ANVF), 130-150 (SALI…GFGA), 153-173 (LSAA…SMLL), 196-216 (WTAV…IVFW), 250-270 (VAIQ…VLWP), 271-291 (VAHM…VFIV), and 311-331 (PMGL…AIAV).

It belongs to the UbiA prenyltransferase family. Protoheme IX farnesyltransferase subfamily.

Its subcellular location is the cell membrane. It carries out the reaction heme b + (2E,6E)-farnesyl diphosphate + H2O = Fe(II)-heme o + diphosphate. It functions in the pathway porphyrin-containing compound metabolism; heme O biosynthesis; heme O from protoheme: step 1/1. Converts heme B (protoheme IX) to heme O by substitution of the vinyl group on carbon 2 of heme B porphyrin ring with a hydroxyethyl farnesyl side group. In Cutibacterium acnes (strain DSM 16379 / KPA171202) (Propionibacterium acnes), this protein is Protoheme IX farnesyltransferase.